The chain runs to 296 residues: Bifunctional protein FolD (296 aa).

NADP(+) contacts are provided by residues 168–170, T197, and V238; that span reads GRS.

This sequence belongs to the tetrahydrofolate dehydrogenase/cyclohydrolase family. Homodimer.

It carries out the reaction (6R)-5,10-methylene-5,6,7,8-tetrahydrofolate + NADP(+) = (6R)-5,10-methenyltetrahydrofolate + NADPH. The catalysed reaction is (6R)-5,10-methenyltetrahydrofolate + H2O = (6R)-10-formyltetrahydrofolate + H(+). Its pathway is one-carbon metabolism; tetrahydrofolate interconversion. Catalyzes the oxidation of 5,10-methylenetetrahydrofolate to 5,10-methenyltetrahydrofolate and then the hydrolysis of 5,10-methenyltetrahydrofolate to 10-formyltetrahydrofolate. This Desulfotalea psychrophila (strain LSv54 / DSM 12343) protein is Bifunctional protein FolD.